Consider the following 769-residue polypeptide: PDZ domain-containing protein 4 (769 aa).

The PDZ domain maps to 130 to 214 (EVELYKSSHR…TNISLLVARP (85 aa)). Positions 221-315 (RWKDSDRDDF…TNTPGSLRKF (95 aa)) are disordered. The span at 229-239 (DFLDDFGSENE) shows a compositional bias: acidic residues. A Phosphoserine modification is found at Ser-236. Residues 282–298 (RTDESTRNEESSEHDLL) are compositionally biased toward basic and acidic residues. Residues 389–419 (VNRNESLGHEMAMLEEELRHLEFKCRNILRA) are a coiled coil. The tract at residues 445-579 (ASEPKKHELS…RHRGQGQEGE (135 aa)) is disordered. A compositionally biased stretch (basic and acidic residues) spans 447–467 (EPKKHELSDISELPEKSDKDS). Ser-454 carries the phosphoserine modification. Residues 468–479 (TSAYNTGESCRS) are compositionally biased toward polar residues. Over residues 530 to 547 (LSRDPEAGRRQHAEERGR) the composition is skewed to basic and acidic residues.

As to expression, brain-specific. Expressed in fetal and adult brain. Up-regulated in synovial carcinomas.

The protein localises to the cytoplasm. Its subcellular location is the cell cortex. This is PDZ domain-containing protein 4 (PDZD4) from Homo sapiens (Human).